The sequence spans 224 residues: Metalloproteinase inhibitor 4 (224 aa).

The first 29 residues, 1–29 (MPWSPLAALSWALVLRLLALLWPPGRGEA), serve as a signal peptide directing secretion. Cys-30 contributes to the Zn(2+) binding site. Involved in metalloproteinase-binding stretches follow at residues 30 to 33 (CSCA) and 99 to 100 (SS). Cystine bridges form between Cys-30–Cys-102, Cys-32–Cys-131, Cys-42–Cys-156, Cys-158–Cys-205, Cys-163–Cys-168, and Cys-176–Cys-197. The region spanning 30–156 (CSCAPAHPQQ…SLNHHYHQNC (127 aa)) is the NTR domain.

The protein belongs to the protease inhibitor I35 (TIMP) family. Expressed in retina, smooth muscle, skin, pancreas, skeletal muscle, heart, brain, lung, kidney and testis. Not found in cartilage, spleen and liver.

The protein resides in the secreted. Functionally, complexes with metalloproteinases (such as collagenases) and irreversibly inactivates them by binding to their catalytic zinc cofactor. This chain is Metalloproteinase inhibitor 4 (Timp4), found in Rattus norvegicus (Rat).